The primary structure comprises 398 residues: Putative defective protein IntQ (398 aa).

Positions 51–146 constitute a Core-binding (CB) domain; the sequence is LTIKELAEKF…NLNAVFQFGV (96 aa). One can recognise a Tyr recombinase domain in the interval 167 to 378; the sequence is TIPDPLSREE…SENNNAQVAL (212 aa). Residues Arg-202, Lys-236, Arg-331, and His-354 contribute to the active site. The O-(3'-phospho-DNA)-tyrosine intermediate role is filled by Tyr-364.

Belongs to the 'phage' integrase family.

Functionally, integrase is necessary for integration of the phage into the host genome by site-specific recombination. In conjunction with excisionase, integrase is also necessary for excision of the prophage from the host genome. This Escherichia coli (strain K12) protein is Putative defective protein IntQ (intQ).